We begin with the raw amino-acid sequence, 898 residues long: Phosphoenolpyruvate carboxylase (898 aa).

Residues His-138 and Lys-561 contribute to the active site.

This sequence belongs to the PEPCase type 1 family. Mg(2+) serves as cofactor.

It carries out the reaction oxaloacetate + phosphate = phosphoenolpyruvate + hydrogencarbonate. Forms oxaloacetate, a four-carbon dicarboxylic acid source for the tricarboxylic acid cycle. This chain is Phosphoenolpyruvate carboxylase, found in Streptococcus pneumoniae serotype 2 (strain D39 / NCTC 7466).